The chain runs to 252 residues: Imidazole glycerol phosphate synthase subunit HisF (252 aa).

Active-site residues include Asp11 and Asp130.

The protein belongs to the HisA/HisF family. Heterodimer of HisH and HisF.

It is found in the cytoplasm. It carries out the reaction 5-[(5-phospho-1-deoxy-D-ribulos-1-ylimino)methylamino]-1-(5-phospho-beta-D-ribosyl)imidazole-4-carboxamide + L-glutamine = D-erythro-1-(imidazol-4-yl)glycerol 3-phosphate + 5-amino-1-(5-phospho-beta-D-ribosyl)imidazole-4-carboxamide + L-glutamate + H(+). Its pathway is amino-acid biosynthesis; L-histidine biosynthesis; L-histidine from 5-phospho-alpha-D-ribose 1-diphosphate: step 5/9. IGPS catalyzes the conversion of PRFAR and glutamine to IGP, AICAR and glutamate. The HisF subunit catalyzes the cyclization activity that produces IGP and AICAR from PRFAR using the ammonia provided by the HisH subunit. The polypeptide is Imidazole glycerol phosphate synthase subunit HisF (Sulfurihydrogenibium sp. (strain YO3AOP1)).